A 322-amino-acid chain; its full sequence is tRNA-dihydrouridine(16) synthase (322 aa).

Residues 7-9 (PME) and Gln-68 contribute to the FMN site. The Proton donor role is filled by Cys-98. FMN is bound by residues Lys-139, 200–202 (NGE), and 224–225 (CR).

This sequence belongs to the Dus family. DusC subfamily. FMN serves as cofactor.

The enzyme catalyses 5,6-dihydrouridine(16) in tRNA + NADP(+) = uridine(16) in tRNA + NADPH + H(+). The catalysed reaction is 5,6-dihydrouridine(16) in tRNA + NAD(+) = uridine(16) in tRNA + NADH + H(+). In terms of biological role, catalyzes the synthesis of 5,6-dihydrouridine (D), a modified base found in the D-loop of most tRNAs, via the reduction of the C5-C6 double bond in target uridines. Specifically modifies U16 in tRNAs. This chain is tRNA-dihydrouridine(16) synthase, found in Vibrio parahaemolyticus serotype O3:K6 (strain RIMD 2210633).